Consider the following 594-residue polypeptide: Elongation factor 4 (594 aa).

One can recognise a tr-type G domain in the interval 2 to 184; sequence KNIRNFSIIA…TIVAKVPAPE (183 aa). GTP-binding positions include 14 to 19 and 131 to 134; these read DHGKST and NKID.

It belongs to the TRAFAC class translation factor GTPase superfamily. Classic translation factor GTPase family. LepA subfamily.

The protein resides in the cell inner membrane. It catalyses the reaction GTP + H2O = GDP + phosphate + H(+). Its function is as follows. Required for accurate and efficient protein synthesis under certain stress conditions. May act as a fidelity factor of the translation reaction, by catalyzing a one-codon backward translocation of tRNAs on improperly translocated ribosomes. Back-translocation proceeds from a post-translocation (POST) complex to a pre-translocation (PRE) complex, thus giving elongation factor G a second chance to translocate the tRNAs correctly. Binds to ribosomes in a GTP-dependent manner. The protein is Elongation factor 4 of Francisella tularensis subsp. tularensis (strain FSC 198).